A 183-amino-acid chain; its full sequence is Helofensin-1 (183 aa).

The N-terminal stretch at 1–26 (MQMDWLFIAVVSAIGLLSSGVPGTQG) is a signal peptide. One copy of the C(6)C(4)C(9)C(6)CC 1; approximate repeat lies at 27–64 (AYTTEQCRALNGTCRFYACFPKNVVIGKCDWLGWGCCA). The C(6)C(4)C(9)C(6)CC 2; approximate repeat unit spans residues 65–101 (RTPLERCTAKKGTCTASGCTETDTDHGPCDGGAQCCQ). The C(6)C(4)C(9)C(6)CC 3; approximate repeat unit spans residues 102-139 (RDPVKYCKFHGNVCGRGKCPMDHIPIGEQCMPGYPCCK). Residues 140 to 177 (RDGPAYCKSKGGKCLRRCSQIVPTDIIGVCADGVPCCK) form a C(6)C(4)C(9)C(6)CC 4; approximate repeat.

Belongs to the beta-defensin family. Helofensin subfamily. In terms of tissue distribution, expressed by the mandibular venom gland.

Its subcellular location is the secreted. Lethal toxin which possesses an inhibitory effect on direct electrical stimulation of the isolated hemi-diaphragm of mice. Neither hemorrhagic nor hemolytic activities are detected. Phospholipase A2 activity, proteolytic activity and arginine esterolytic activity are absent. In Heloderma suspectum cinctum (Banded Gila monster), this protein is Helofensin-1.